A 342-amino-acid polypeptide reads, in one-letter code: S-adenosylmethionine:tRNA ribosyltransferase-isomerase (342 aa).

It belongs to the QueA family. Monomer.

The protein localises to the cytoplasm. It carries out the reaction 7-aminomethyl-7-carbaguanosine(34) in tRNA + S-adenosyl-L-methionine = epoxyqueuosine(34) in tRNA + adenine + L-methionine + 2 H(+). Its pathway is tRNA modification; tRNA-queuosine biosynthesis. In terms of biological role, transfers and isomerizes the ribose moiety from AdoMet to the 7-aminomethyl group of 7-deazaguanine (preQ1-tRNA) to give epoxyqueuosine (oQ-tRNA). The polypeptide is S-adenosylmethionine:tRNA ribosyltransferase-isomerase (Bacillus subtilis (strain 168)).